The following is a 266-amino-acid chain: Chorismate mutase (266 aa).

The region spanning 7–263 is the Chorismate mutase domain; that stretch reads MADSERALNL…EVEYLMQRLI (257 aa). 6 residues coordinate L-tyrosine: arginine 77, arginine 78, asparagine 144, glycine 146, serine 147, and threonine 150. Residues asparagine 144, glycine 146, and serine 147 each coordinate L-tryptophan.

Homodimer.

It is found in the cytoplasm. It carries out the reaction chorismate = prephenate. The protein operates within metabolic intermediate biosynthesis; prephenate biosynthesis; prephenate from chorismate: step 1/1. With respect to regulation, each dimer has two allosteric binding sites that can bind the regulatory effectors tryptophan or tyrosine. Can bind either one tryptophan or one tyrosine, two tryptophan or two tyrosine or one tryptophan and one tyrosine, which differentially affect the catalytic activity. Activated by tryptophan and subject to feedback inhibition by tyrosine. In the presence of both tryptophan and tyrosine, the enzyme is in the activated state. In terms of biological role, catalyzes the Claisen rearrangement of chorismate to prephenate. Acts at the first branch point in the aromatic amino acid pathway where it steers biosynthesis towards phenylalanine and tyrosine, and away from tryptophan. The polypeptide is Chorismate mutase (Trichoderma parareesei (Filamentous fungus)).